A 137-amino-acid polypeptide reads, in one-letter code: TM2 domain-containing protein DDB_G0287015 (137 aa).

Positions 9-57 (QASLVVAYLLLIFLGFFGVHRFYVGRTISGVVYLLTGGIFGIGYIVDFF) constitute a TM2 domain. A run of 2 helical transmembrane segments spans residues 12–32 (LVVA…RFYV) and 39–59 (VVYL…FFLL). Residues 106-137 (IQPQQQQYYQQPYQQQQYQPQPYQPNSPQYQP) form a disordered region.

It belongs to the TM2 family.

The protein resides in the membrane. This Dictyostelium discoideum (Social amoeba) protein is TM2 domain-containing protein DDB_G0287015.